We begin with the raw amino-acid sequence, 438 residues long: PHAF1 protein CG7083 (438 aa).

Belongs to the PHAF1 family.

The protein localises to the cytoplasm. The protein resides in the preautophagosomal structure. Functionally, may play a regulatory role in autophagic activity. The protein is PHAF1 protein CG7083 of Drosophila melanogaster (Fruit fly).